The primary structure comprises 347 residues: Protein-glutamate methylesterase/protein-glutamine glutaminase 3 (347 aa).

One can recognise a Response regulatory domain in the interval 3-120 (QVFIVDDSAV…KNFLEESEIL (118 aa)). Asp54 carries the 4-aspartylphosphate modification. The region spanning 159-347 (IDTTDKLIAI…SKIVGEVQYF (189 aa)) is the CheB-type methylesterase domain. Residues Ser171, His197, and Asp293 contribute to the active site.

It belongs to the CheB family. Phosphorylated by CheA. Phosphorylation of the N-terminal regulatory domain activates the methylesterase activity.

Its subcellular location is the cytoplasm. The enzyme catalyses [protein]-L-glutamate 5-O-methyl ester + H2O = L-glutamyl-[protein] + methanol + H(+). It carries out the reaction L-glutaminyl-[protein] + H2O = L-glutamyl-[protein] + NH4(+). Functionally, involved in chemotaxis. Part of a chemotaxis signal transduction system that modulates chemotaxis in response to various stimuli. Catalyzes the demethylation of specific methylglutamate residues introduced into the chemoreceptors (methyl-accepting chemotaxis proteins or MCP) by CheR. Also mediates the irreversible deamidation of specific glutamine residues to glutamic acid. The sequence is that of Protein-glutamate methylesterase/protein-glutamine glutaminase 3 from Leptospira interrogans serogroup Icterohaemorrhagiae serovar copenhageni (strain Fiocruz L1-130).